We begin with the raw amino-acid sequence, 362 residues long: Histidinol-phosphate aminotransferase (362 aa).

N6-(pyridoxal phosphate)lysine is present on Lys-218.

The protein belongs to the class-II pyridoxal-phosphate-dependent aminotransferase family. Histidinol-phosphate aminotransferase subfamily. In terms of assembly, homodimer. Pyridoxal 5'-phosphate serves as cofactor.

It carries out the reaction L-histidinol phosphate + 2-oxoglutarate = 3-(imidazol-4-yl)-2-oxopropyl phosphate + L-glutamate. It participates in amino-acid biosynthesis; L-histidine biosynthesis; L-histidine from 5-phospho-alpha-D-ribose 1-diphosphate: step 7/9. In Ruegeria sp. (strain TM1040) (Silicibacter sp.), this protein is Histidinol-phosphate aminotransferase.